The following is a 481-amino-acid chain: UDP-glucose 6-dehydrogenase 1 (481 aa).

Residues 8 to 13 (GAGYVG), aspartate 33, arginine 38, 86 to 90 (VNTPT), 127 to 128 (ST), and glutamate 161 each bind NAD(+). Residues 157-161 (EFLAE), 216-223 (KLAANAFL), and 256-269 (RIGPKFLNASVGFG) each bind substrate. Cysteine 272 serves as the catalytic Nucleophile. 272 to 275 (CFQK) contributes to the NAD(+) binding site. 334 to 335 (FK) lines the substrate pocket. Residue arginine 342 participates in NAD(+) binding. Arginine 448 lines the substrate pocket.

It belongs to the UDP-glucose/GDP-mannose dehydrogenase family.

The enzyme catalyses UDP-alpha-D-glucose + 2 NAD(+) + H2O = UDP-alpha-D-glucuronate + 2 NADH + 3 H(+). Its pathway is nucleotide-sugar biosynthesis; UDP-alpha-D-glucuronate biosynthesis; UDP-alpha-D-glucuronate from UDP-alpha-D-glucose: step 1/1. With respect to regulation, inhibited by UDP-xylose. Functionally, involved in the biosynthesis of UDP-glucuronic acid (UDP-GlcA), providing nucleotide sugars for cell-wall polymers. The chain is UDP-glucose 6-dehydrogenase 1 (UGD1) from Arabidopsis thaliana (Mouse-ear cress).